The sequence spans 56 residues: uncharacterized protein (56 aa).

This is an uncharacterized protein from Orgyia pseudotsugata (Douglas-fir tussock moth).